A 603-amino-acid chain; its full sequence is Elongation factor 4 (603 aa).

The tr-type G domain maps to 7-191 (DNIRNFSIVA…AIVTRLPPPK (185 aa)). GTP contacts are provided by residues 19–24 (DHGKST) and 138–141 (NKVD).

This sequence belongs to the TRAFAC class translation factor GTPase superfamily. Classic translation factor GTPase family. LepA subfamily.

It localises to the cell inner membrane. The catalysed reaction is GTP + H2O = GDP + phosphate + H(+). Required for accurate and efficient protein synthesis under certain stress conditions. May act as a fidelity factor of the translation reaction, by catalyzing a one-codon backward translocation of tRNAs on improperly translocated ribosomes. Back-translocation proceeds from a post-translocation (POST) complex to a pre-translocation (PRE) complex, thus giving elongation factor G a second chance to translocate the tRNAs correctly. Binds to ribosomes in a GTP-dependent manner. The sequence is that of Elongation factor 4 from Rhodopseudomonas palustris (strain BisA53).